A 442-amino-acid polypeptide reads, in one-letter code: Proline--tRNA ligase (442 aa).

The protein belongs to the class-II aminoacyl-tRNA synthetase family. ProS type 2 subfamily. As to quaternary structure, homodimer.

It is found in the cytoplasm. The catalysed reaction is tRNA(Pro) + L-proline + ATP = L-prolyl-tRNA(Pro) + AMP + diphosphate. Functionally, catalyzes the attachment of proline to tRNA(Pro) in a two-step reaction: proline is first activated by ATP to form Pro-AMP and then transferred to the acceptor end of tRNA(Pro). This is Proline--tRNA ligase from Brucella anthropi (strain ATCC 49188 / DSM 6882 / CCUG 24695 / JCM 21032 / LMG 3331 / NBRC 15819 / NCTC 12168 / Alc 37) (Ochrobactrum anthropi).